A 397-amino-acid chain; its full sequence is Exodeoxyribonuclease 7 large subunit (397 aa).

The protein belongs to the XseA family. As to quaternary structure, heterooligomer composed of large and small subunits.

It is found in the cytoplasm. The enzyme catalyses Exonucleolytic cleavage in either 5'- to 3'- or 3'- to 5'-direction to yield nucleoside 5'-phosphates.. Its function is as follows. Bidirectionally degrades single-stranded DNA into large acid-insoluble oligonucleotides, which are then degraded further into small acid-soluble oligonucleotides. The sequence is that of Exodeoxyribonuclease 7 large subunit from Anaplasma marginale (strain St. Maries).